Reading from the N-terminus, the 437-residue chain is Glycogen synthase (437 aa).

K15 contributes to the ADP-alpha-D-glucose binding site.

It belongs to the glycosyltransferase 1 family. Bacterial/plant glycogen synthase subfamily.

It carries out the reaction [(1-&gt;4)-alpha-D-glucosyl](n) + ADP-alpha-D-glucose = [(1-&gt;4)-alpha-D-glucosyl](n+1) + ADP + H(+). Its pathway is glycan biosynthesis; glycogen biosynthesis. Its function is as follows. Synthesizes alpha-1,4-glucan chains using ADP-glucose. The polypeptide is Glycogen synthase (Thermus thermophilus (strain ATCC BAA-163 / DSM 7039 / HB27)).